The sequence spans 363 residues: Protein RecA (363 aa).

Residue 78–85 coordinates ATP; the sequence is GPESGGKT.

This sequence belongs to the RecA family.

The protein localises to the cytoplasm. In terms of biological role, can catalyze the hydrolysis of ATP in the presence of single-stranded DNA, the ATP-dependent uptake of single-stranded DNA by duplex DNA, and the ATP-dependent hybridization of homologous single-stranded DNAs. It interacts with LexA causing its activation and leading to its autocatalytic cleavage. Probably involved in base excision repair. Following severe irradiation (7 kGy of gamma irradiation) genomic DNA is fragmented. DNA is progressively degraded for the first 1.5 hours after IR, in a step promoted by RecA and counterbalanced by DNA Pol I and Pol III, followed by massive DNA synthesis and genome reassembly in the next hour. Optimal priming of DNA synthesis requires both RecA and RadA, Pol III initiates DNA synthesis while both Pol I and Pol III are required for its continuation. In the absence of RecA the majority of the chromosome is still reconstituted, via either single-strand annealing or non-homologous end joining. This is Protein RecA from Deinococcus radiodurans (strain ATCC 13939 / DSM 20539 / JCM 16871 / CCUG 27074 / LMG 4051 / NBRC 15346 / NCIMB 9279 / VKM B-1422 / R1).